Here is a 550-residue protein sequence, read N- to C-terminus: Acetyl-coenzyme A transporter 1 (550 aa).

Residues 1-74 are Cytoplasmic-facing; it reads MSPTISHKDN…KRSYRAELSS (74 aa). Position 42 is a phosphoserine (Ser-42). A helical transmembrane segment spans residues 75 to 95; that stretch reads ILLLLFLYVLQGIPLGLAGSI. At 96–113 the chain is on the extracellular side; it reads PLILQSKNVSYTDQAFFS. A glycan (N-linked (GlcNAc...) asparagine) is linked at Asn-103. Residues 114-134 traverse the membrane as a helical segment; sequence FVFWPFSLKLLWAPLVDAVYF. Residues 135–141 are Cytoplasmic-facing; it reads KNFGRRK. A helical membrane pass occupies residues 142 to 162; that stretch reads SWLVPTQYILGIFMIYLSTQV. Residues 163-256 lie on the Extracellular side of the membrane; it reads DRLLGNIDGR…FQPQPRGIVT (94 aa). Residues 257–277 form a helical membrane-spanning segment; it reads LSDFLFFWGTVFLITTTLVAL. Residues 278–300 lie on the Cytoplasmic side of the membrane; that stretch reads LKKETREASVVKEETQGITDTYK. Residues 301 to 321 form a helical membrane-spanning segment; sequence LLFSIIKMPAVLAFCLLILTS. Over 322 to 344 the chain is Extracellular; sequence KIGFSAADAVTGLKLVEEGVPKE. The helical transmembrane segment at 345–365 threads the bilayer; the sequence is HLALLAVPMVPLQIILPLLIS. At 366–375 the chain is on the cytoplasmic side; sequence KYTAGPQPLN. The helical transmembrane segment at 376–396 threads the bilayer; it reads IFYKAMPYRLLLGLEYALLVW. Over 397-405 the chain is Extracellular; it reads WTPKVEHQG. The helical transmembrane segment at 406–426 threads the bilayer; it reads GFPIYYYIIVLLSYALHQVTL. Residues 427-509 lie on the Cytoplasmic side of the membrane; that stretch reads YSMYVSIMAF…LGGSCVTALD (83 aa). A helical membrane pass occupies residues 510–530; the sequence is GYYVESIVCVLIGFGWWFFLG. Residues 531–550 lie on the Extracellular side of the membrane; the sequence is PKFKKLQDEGPSSWKCKRTN.

Belongs to the SLC33A transporter family. As to quaternary structure, homodimerizes. As to expression, expressed in brain at all developmental stages. Detected in hippocampus, hypothalamus, cerebellum, cortex, olfactory bulb, and the ventral and dorsal anterior olfactory nucleus.

Its subcellular location is the endoplasmic reticulum membrane. The enzyme catalyses acetyl-CoA(in) = acetyl-CoA(out). In terms of biological role, acetyl-CoA transporter that mediates active acetyl-CoA import through the endoplasmic reticulum (ER) membrane into the ER lumen where specific ER-based acetyl-CoA:lysine acetyltransferases are responsible for the acetylation of ER-based protein substrates, such as BACE1. Necessary for O-acetylation of gangliosides. The protein is Acetyl-coenzyme A transporter 1 (Slc33a1) of Rattus norvegicus (Rat).